Reading from the N-terminus, the 132-residue chain is Lectin OAA (132 aa).

2 repeat units span residues 1 to 66 (ALYN…TLLG) and 67 to 132 (NNSY…GTTL). The segment at 1–132 (ALYNVENQWG…GPIGFKGTTL (132 aa)) is 2 X approximate tandem repeats.

As to quaternary structure, monomer.

Functionally, lectin specific for high mannose N-glycans, recognizes the branched moiety of these glycans. Does not recognize other types of N-glycans or monosaccharides. Agglutinates trypsin-treated rabbit erythrocytes. Does not require divalent cations for activity. Inhibits HIV replication in MT4 cells with an EC(50) of 45 nM. Binds to the HIV envelope glycoprotein gp120. This Planktothrix agardhii (Oscillatoria agardhii) protein is Lectin OAA.